Here is a 116-residue protein sequence, read N- to C-terminus: S-adenosylmethionine decarboxylase proenzyme (116 aa).

Ser-63 acts as the Schiff-base intermediate with substrate; via pyruvic acid in catalysis. At Ser-63 the chain carries Pyruvic acid (Ser); by autocatalysis. His-68 functions as the Proton acceptor; for processing activity in the catalytic mechanism. Cys-83 functions as the Proton donor; for catalytic activity in the catalytic mechanism.

Belongs to the prokaryotic AdoMetDC family. Type 1 subfamily. Heterotetramer of two alpha and two beta chains arranged as a dimer of alpha/beta heterodimers. Requires pyruvate as cofactor. Post-translationally, is synthesized initially as an inactive proenzyme. Formation of the active enzyme involves a self-maturation process in which the active site pyruvoyl group is generated from an internal serine residue via an autocatalytic post-translational modification. Two non-identical subunits are generated from the proenzyme in this reaction, and the pyruvate is formed at the N-terminus of the alpha chain, which is derived from the carboxyl end of the proenzyme. The post-translation cleavage follows an unusual pathway, termed non-hydrolytic serinolysis, in which the side chain hydroxyl group of the serine supplies its oxygen atom to form the C-terminus of the beta chain, while the remainder of the serine residue undergoes an oxidative deamination to produce ammonia and the pyruvoyl group blocking the N-terminus of the alpha chain.

It catalyses the reaction S-adenosyl-L-methionine + H(+) = S-adenosyl 3-(methylsulfanyl)propylamine + CO2. It functions in the pathway amine and polyamine biosynthesis; S-adenosylmethioninamine biosynthesis; S-adenosylmethioninamine from S-adenosyl-L-methionine: step 1/1. In terms of biological role, catalyzes the decarboxylation of S-adenosylmethionine to S-adenosylmethioninamine (dcAdoMet), the propylamine donor required for the synthesis of the polyamines spermine and spermidine from the diamine putrescine. The chain is S-adenosylmethionine decarboxylase proenzyme from Clostridium botulinum (strain ATCC 19397 / Type A).